The sequence spans 291 residues: Lys-63-specific deubiquitinase BRCC36 (291 aa).

Ala-2 bears the N-acetylalanine mark. The region spanning 12-179 (VHLESDAFLV…YTCFQSVQAQ (168 aa)) is the MPN domain. Positions 122, 124, and 135 each coordinate Zn(2+). Positions 122–135 (HSHPHITVWPSHVD) match the JAMM motif motif. A Phosphoserine modification is found at Ser-233.

Belongs to the peptidase M67A family. BRCC36 subfamily. As to quaternary structure, component of the ARISC complex, at least composed of UIMC1/RAP80, ABRAXAS1, BRCC3/BRCC36, BABAM2 and BABAM1/NBA1. Component of the BRCA1-A complex, at least composed of BRCA1, BARD1, UIMC1/RAP80, ABRAXAS1, BRCC3/BRCC36, BABAM2 and BABAM1/NBA1. In the BRCA1-A complex, interacts directly with ABRAXAS1 and BABAM2. Component of the BRISC complex, at least composed of ABRAXAS2, BRCC3/BRCC36, BABAM2 and BABAM1/NBA1. Identified in a complex with SHMT2 and the other subunits of the BRISC complex. In the BRISC complex, interacts directly with ABRAXAS2. Identified in a complex with ABRAXAS2 and NUMA1. The BRISC complex interacts with the CSN complex. Component of the BRCA1/BRCA2 containing complex (BRCC), which also contains BRCA1, BRCA2, BARD1, BABAM2 and RAD51. BRCC is a ubiquitin E3 ligase complex that enhances cellular survival following DNA damage. Interacts with BRCA1. Binds polyubiquitin. Interacts with PWWP2B. Interacts with HDAC1; this interaction is enhanced in the presence of PWWP2B. The cofactor is Zn(2+).

The protein localises to the nucleus. It is found in the cytoplasm. The protein resides in the cytoskeleton. It localises to the spindle pole. Metalloprotease that specifically cleaves 'Lys-63'-linked polyubiquitin chains. Does not have activity toward 'Lys-48'-linked polyubiquitin chains. Component of the BRCA1-A complex, a complex that specifically recognizes 'Lys-63'-linked ubiquitinated histones H2A and H2AX at DNA lesions sites, leading to target the BRCA1-BARD1 heterodimer to sites of DNA damage at double-strand breaks (DSBs). In the BRCA1-A complex, it specifically removes 'Lys-63'-linked ubiquitin on histones H2A and H2AX, antagonizing the RNF8-dependent ubiquitination at double-strand breaks (DSBs). Catalytic subunit of the BRISC complex, a multiprotein complex that specifically cleaves 'Lys-63'-linked ubiquitin in various substrates. Mediates the specific 'Lys-63'-specific deubiquitination associated with the COP9 signalosome complex (CSN), via the interaction of the BRISC complex with the CSN complex. The BRISC complex is required for normal mitotic spindle assembly and microtubule attachment to kinetochores via its role in deubiquitinating NUMA1. Plays a role in interferon signaling via its role in the deubiquitination of the interferon receptor IFNAR1; deubiquitination increases IFNAR1 activity by enhancing its stability and cell surface expression. Acts as a regulator of the NLRP3 inflammasome by mediating deubiquitination of NLRP3, leading to NLRP3 inflammasome assembly. Down-regulates the response to bacterial lipopolysaccharide (LPS) via its role in IFNAR1 deubiquitination. Deubiquitinates HDAC1 and PWWP2B leading to their stabilization. The chain is Lys-63-specific deubiquitinase BRCC36 (Brcc3) from Rattus norvegicus (Rat).